Consider the following 230-residue polypeptide: 2,3-bisphosphoglycerate-dependent phosphoglycerate mutase (230 aa).

Residues 8 to 15, 21 to 22, arginine 60, 87 to 90, lysine 98, 114 to 115, and 183 to 184 each bind substrate; these read RHGESEWN, TG, ERHY, RR, and GN. Histidine 9 (tele-phosphohistidine intermediate) is an active-site residue. Glutamate 87 acts as the Proton donor/acceptor in catalysis.

Belongs to the phosphoglycerate mutase family. BPG-dependent PGAM subfamily.

It carries out the reaction (2R)-2-phosphoglycerate = (2R)-3-phosphoglycerate. It participates in carbohydrate degradation; glycolysis; pyruvate from D-glyceraldehyde 3-phosphate: step 3/5. Its function is as follows. Catalyzes the interconversion of 2-phosphoglycerate and 3-phosphoglycerate. The sequence is that of 2,3-bisphosphoglycerate-dependent phosphoglycerate mutase from Streptococcus pneumoniae (strain ATCC BAA-255 / R6).